Consider the following 538-residue polypeptide: Retinoblastoma-binding protein 5 (538 aa).

2 WD repeats span residues 22 to 63 (DCIS…KIIS) and 64 to 103 (AHIH…CDQR). K129 is covalently cross-linked (Glycyl lysine isopeptide (Lys-Gly) (interchain with G-Cter in SUMO2)). WD repeat units follow at residues 148 to 188 (DDDS…LVAS), 196 to 235 (SNTT…TCGR), 249 to 291 (VNRT…KILH), and 293 to 331 (TRGE…NWSA). A Phosphothreonine; by CDK1 modification is found at T252. The tract at residues 330 to 366 (SAFAPDFKELDENVEYEERESEFDIEDEDKSEPEQTG) is interaction with ASH2L. Residues 344–360 (EYEERESEFDIEDEDKS) are compositionally biased toward acidic residues. The interval 344-377 (EYEERESEFDIEDEDKSEPEQTGADAAEDEEVDV) is disordered. The residue at position 350 (S350) is a Phosphoserine. The interval 371–380 (EDEEVDVTSV) is interaction with WDR5. Phosphoserine occurs at positions 388 and 389. A disordered region spans residues 408-519 (VEDPEENPYG…LPLEGSTKGK (112 aa)). Residues 479-490 (SKKKQAGRPKGS) show a composition bias toward basic residues. Positions 491-510 (KGKEKDSPFKPKLYKGDRGL) are enriched in basic and acidic residues. S497 bears the Phosphoserine; by CDK1 mark. S525 is subject to Phosphoserine.

Component of the SET1 complex, at least composed of the catalytic subunit (SETD1A or SETD1B), WDR5, WDR82, RBBP5, ASH2L/ASH2, CXXC1/CFP1, HCFC1 and DPY30. Core component of several methyltransferase-containing complexes including MLL1/MLL, MLL2/3 (also named ASCOM complex) and MLL4/WBP7. Each complex is at least composed of ASH2L, RBBP5, WDR5, DPY30, one or more specific histone methyltransferases (KMT2A/MLL1, KMT2D/MLL2, KMT2C/MLL3 and KMT2B/MLL4), and the facultative components PAGR1, BACC1, CHD8, E2F6, HCFC1, HCFC2, HSP70, INO80C, KDM6A, KANSL1, LAS1L, MAX, MCRS1, MEN1, MGA, MYST1/MOF, NCOA6, PAXIP1/PTIP, PELP1, PHF20, PRP31, RING2, RUVB1/TIP49A, RUVB2/TIP49B, SENP3, TAF1, TAF4, TAF6, TAF7, TAF9, TEX10 and alpha- and beta-tubulin. Component of a histone methylation complex composed of at least ZNF335, RBBP5, ASH2L and WDR5; the complex may have histone H3-specific methyltransferase activity, however does not have specificity for 'Lys-4' of histone H3. Interacts with ZNF335. Interacts with ASH2L; the interaction is direct. Interacts with WDR5; the interaction is direct. Components of the ZNF335-RBBP5-ASH2L-WDR5 histone methylation complex may associate with components of a nuclear receptor-mediated transcription complex to form a complex at least composed of ZNF335, HCFC1, CCAR2, EMSY, MKI67, RBBP5, ASH2L and WDR5. Within this complex interacts with EMSY. Found in a complex with RBBP5, ASH2L, DPY30, KMT2A, KMT2D and WDR5. Interacts with SETD1A. Interacts with WDR82.

The protein resides in the nucleus. In terms of biological role, in embryonic stem (ES) cells, plays a crucial role in the differentiation potential, particularly along the neural lineage, regulating gene induction and H3 'Lys-4' methylation at key developmental loci, including that mediated by retinoic acid. Does not affect ES cell self-renewal. Component or associated component of some histone methyltransferase complexes which regulates transcription through recruitment of those complexes to gene promoters. As part of the MLL1/MLL complex, involved in mono-, di- and trimethylation at 'Lys-4' of histone H3. Histone H3 'Lys-4' methylation represents a specific tag for epigenetic transcriptional activation. In association with ASH2L and WDR5, stimulates the histone methyltransferase activities of KMT2A, KMT2B, KMT2C, KMT2D, SETD1A and SETD1B. The chain is Retinoblastoma-binding protein 5 (Rbbp5) from Mus musculus (Mouse).